A 476-amino-acid chain; its full sequence is Aspartyl/glutamyl-tRNA(Asn/Gln) amidotransferase subunit B (476 aa).

This sequence belongs to the GatB/GatE family. GatB subfamily. In terms of assembly, heterotrimer of A, B and C subunits.

The catalysed reaction is L-glutamyl-tRNA(Gln) + L-glutamine + ATP + H2O = L-glutaminyl-tRNA(Gln) + L-glutamate + ADP + phosphate + H(+). The enzyme catalyses L-aspartyl-tRNA(Asn) + L-glutamine + ATP + H2O = L-asparaginyl-tRNA(Asn) + L-glutamate + ADP + phosphate + 2 H(+). Its function is as follows. Allows the formation of correctly charged Asn-tRNA(Asn) or Gln-tRNA(Gln) through the transamidation of misacylated Asp-tRNA(Asn) or Glu-tRNA(Gln) in organisms which lack either or both of asparaginyl-tRNA or glutaminyl-tRNA synthetases. The reaction takes place in the presence of glutamine and ATP through an activated phospho-Asp-tRNA(Asn) or phospho-Glu-tRNA(Gln). The sequence is that of Aspartyl/glutamyl-tRNA(Asn/Gln) amidotransferase subunit B from Bacillus velezensis (strain DSM 23117 / BGSC 10A6 / LMG 26770 / FZB42) (Bacillus amyloliquefaciens subsp. plantarum).